A 118-amino-acid polypeptide reads, in one-letter code: Beta-2-microglobulin (118 aa).

Residues 1–20 (MARVVALVLLGLLSLTGLEA) form the signal peptide. Positions 22–115 (PRVPKVQVYS…LKDPLIVKWD (94 aa)) constitute an Ig-like C1-type domain. A disulfide bond links cysteine 45 and cysteine 99.

It belongs to the beta-2-microglobulin family. As to quaternary structure, heterodimer of an alpha chain and a beta chain. Beta-2-microglobulin is the beta-chain of major histocompatibility complex class I molecules.

It localises to the secreted. Component of the class I major histocompatibility complex (MHC). Involved in the presentation of peptide antigens to the immune system. The polypeptide is Beta-2-microglobulin (B2M) (Equus caballus (Horse)).